A 383-amino-acid chain; its full sequence is Mannitol-1-phosphate 5-dehydrogenase (383 aa).

3 to 14 is an NAD(+) binding site; that stretch reads AVHFGAGNIGRG.

It belongs to the mannitol dehydrogenase family.

The enzyme catalyses D-mannitol 1-phosphate + NAD(+) = beta-D-fructose 6-phosphate + NADH + H(+). This is Mannitol-1-phosphate 5-dehydrogenase from Lacticaseibacillus casei (strain BL23) (Lactobacillus casei).